Consider the following 399-residue polypeptide: Methylthioribose kinase (399 aa).

ATP is bound by residues asparagine 40, lysine 57, and 111-113; that span reads EDL. Aspartate 229 is a binding site for substrate. 246–248 lines the ATP pocket; that stretch reads DAE. Arginine 344 serves as a coordination point for substrate.

Belongs to the methylthioribose kinase family. In terms of assembly, homodimer.

The enzyme catalyses 5-(methylsulfanyl)-D-ribose + ATP = 5-(methylsulfanyl)-alpha-D-ribose 1-phosphate + ADP + H(+). The protein operates within amino-acid biosynthesis; L-methionine biosynthesis via salvage pathway; S-methyl-5-thio-alpha-D-ribose 1-phosphate from S-methyl-5'-thioadenosine (hydrolase route): step 2/2. Functionally, catalyzes the phosphorylation of methylthioribose into methylthioribose-1-phosphate. This chain is Methylthioribose kinase, found in Klebsiella pneumoniae (strain 342).